The sequence spans 66 residues: Large ribosomal subunit protein uL29 (66 aa).

The protein belongs to the universal ribosomal protein uL29 family.

This chain is Large ribosomal subunit protein uL29, found in Geobacillus kaustophilus (strain HTA426).